Consider the following 204-residue polypeptide: Holliday junction branch migration complex subunit RuvA (204 aa).

The interval 1–64 is domain I; the sequence is MIGRLCGTAE…EDAITLFGFI (64 aa). Residues 65-143 are domain II; it reads DAAERDWFRL…AMPTGSAFIP (79 aa). The segment at 144-154 is flexible linker; that stretch reads TGTAPPVAPPQ. Residues 154-204 are domain III; the sequence is QGKLADALSALVNLGYRRAEAEAALSAVQAEAGEDAALDELIRGGLRRLAR.

This sequence belongs to the RuvA family. In terms of assembly, homotetramer. Forms an RuvA(8)-RuvB(12)-Holliday junction (HJ) complex. HJ DNA is sandwiched between 2 RuvA tetramers; dsDNA enters through RuvA and exits via RuvB. An RuvB hexamer assembles on each DNA strand where it exits the tetramer. Each RuvB hexamer is contacted by two RuvA subunits (via domain III) on 2 adjacent RuvB subunits; this complex drives branch migration. In the full resolvosome a probable DNA-RuvA(4)-RuvB(12)-RuvC(2) complex forms which resolves the HJ.

It is found in the cytoplasm. In terms of biological role, the RuvA-RuvB-RuvC complex processes Holliday junction (HJ) DNA during genetic recombination and DNA repair, while the RuvA-RuvB complex plays an important role in the rescue of blocked DNA replication forks via replication fork reversal (RFR). RuvA specifically binds to HJ cruciform DNA, conferring on it an open structure. The RuvB hexamer acts as an ATP-dependent pump, pulling dsDNA into and through the RuvAB complex. HJ branch migration allows RuvC to scan DNA until it finds its consensus sequence, where it cleaves and resolves the cruciform DNA. This is Holliday junction branch migration complex subunit RuvA from Acidiphilium cryptum (strain JF-5).